The following is a 22-amino-acid chain: Short-chain-enoyl-CoA hydratase (22 aa).

It belongs to the enoyl-CoA hydratase/isomerase family.

The catalysed reaction is a short-chain (3S)-3-hydroxyacyl-CoA = a short-chain (2E)-enoyl-CoA + H2O. It functions in the pathway lipid metabolism; butanoate metabolism. This Clostridium pasteurianum protein is Short-chain-enoyl-CoA hydratase (crt).